Reading from the N-terminus, the 211-residue chain is Arginine exporter protein ArgO (211 aa).

Transmembrane regions (helical) follow at residues 1-21, 37-57, 68-88, 111-131, 147-167, and 179-199; these read MISY…PLGP, LMIA…GIFG, LLAL…FGAL, IIAT…DTFV, WFAL…ALLA, and AQRI…FQLA.

Belongs to the LysE/ArgO transporter (TC 2.A.75) family.

The protein localises to the cell inner membrane. It carries out the reaction L-arginine(in) = L-arginine(out). Involved in the export of arginine. Important to control the intracellular level of arginine and the correct balance between arginine and lysine. The sequence is that of Arginine exporter protein ArgO from Salmonella typhimurium (strain LT2 / SGSC1412 / ATCC 700720).